The primary structure comprises 246 residues: Protein lin-37 homolog (246 aa).

Methionine 1 carries the post-translational modification N-acetylmethionine. Glycyl lysine isopeptide (Lys-Gly) (interchain with G-Cter in SUMO2) cross-links involve residues lysine 5 and lysine 7. Residues 39–55 (RLDEEAGKTPLDTHNKD) show a composition bias toward basic and acidic residues. 2 disordered regions span residues 39–90 (RLDE…GGPQ) and 129–208 (VRER…TLIY). Phosphoserine occurs at positions 135 and 138. Phosphothreonine is present on threonine 167. Phosphoserine occurs at positions 182 and 202.

In terms of assembly, component of the DREAM complex (also named LINC complex) at least composed of E2F4, E2F5, LIN9, LIN37, LIN52, LIN54, MYBL1, MYBL2, RBL1, RBL2, RBBP4, TFDP1 and TFDP2. The complex exists in quiescent cells where it represses cell cycle-dependent genes. It dissociates in S phase when LIN9, LIN37, LIN52 and LIN54 form a subcomplex that binds to MYBL2.

The chain is Protein lin-37 homolog (Lin37) from Mus musculus (Mouse).